Here is a 652-residue protein sequence, read N- to C-terminus: Coiled-coil domain-containing protein 81 (652 aa).

At Ser206 the chain carries Phosphoserine. A compositionally biased stretch (basic and acidic residues) spans 238–256 (KCKLKDQSDKEEGTRDISS). A disordered region spans residues 238–258 (KCKLKDQSDKEEGTRDISSPK). Phosphoserine occurs at positions 275, 296, and 417. Residues 436–493 (MDNRQENEIKQRQYRELMDRLEQVQLTEELAAQRAKFLKDKMEETQCYKRALDAQIKN) adopt a coiled-coil conformation.

The protein localises to the cytoplasm. It localises to the cytoskeleton. It is found in the microtubule organizing center. The protein resides in the centrosome. This Homo sapiens (Human) protein is Coiled-coil domain-containing protein 81 (CCDC81).